The sequence spans 115 residues: Large ribosomal subunit protein bL20c (115 aa).

It belongs to the bacterial ribosomal protein bL20 family.

It localises to the plastid. The protein resides in the chloroplast. Its function is as follows. Binds directly to 23S ribosomal RNA and is necessary for the in vitro assembly process of the 50S ribosomal subunit. It is not involved in the protein synthesizing functions of that subunit. The chain is Large ribosomal subunit protein bL20c (rpl20) from Mesostigma viride (Green alga).